We begin with the raw amino-acid sequence, 454 residues long: Tubulin gamma chain (454 aa).

A GTP-binding site is contributed by 142–148 (AGGTGSG).

The protein belongs to the tubulin family.

Its subcellular location is the cytoplasm. The protein localises to the cytoskeleton. The protein resides in the microtubule organizing center. It is found in the spindle pole body. In terms of biological role, tubulin is the major constituent of microtubules. The gamma chain is found at microtubule organizing centers (MTOC) such as the spindle pole or the centrosome, suggesting that it is involved in the minus-end nucleation of microtubule assembly. Interacts physically with beta-tubulin and is involved in microtubule function. The protein is Tubulin gamma chain (mipA) of Emericella nidulans (strain FGSC A4 / ATCC 38163 / CBS 112.46 / NRRL 194 / M139) (Aspergillus nidulans).